The primary structure comprises 99 residues: NADH-quinone oxidoreductase subunit K (99 aa).

The next 3 helical transmembrane spans lie at 3-23 (PINY…GVLL), 28-48 (IVMF…FVTF), and 59-79 (MIAF…LAII).

Belongs to the complex I subunit 4L family. In terms of assembly, NDH-1 is composed of 14 different subunits. Subunits NuoA, H, J, K, L, M, N constitute the membrane sector of the complex.

It localises to the cell membrane. It catalyses the reaction a quinone + NADH + 5 H(+)(in) = a quinol + NAD(+) + 4 H(+)(out). In terms of biological role, NDH-1 shuttles electrons from NADH, via FMN and iron-sulfur (Fe-S) centers, to quinones in the respiratory chain. The immediate electron acceptor for the enzyme in this species is believed to be a menaquinone. Couples the redox reaction to proton translocation (for every two electrons transferred, four hydrogen ions are translocated across the cytoplasmic membrane), and thus conserves the redox energy in a proton gradient. This Mycobacterium avium (strain 104) protein is NADH-quinone oxidoreductase subunit K.